The chain runs to 607 residues: WD repeat-containing protein 1-A (607 aa).

WD repeat units lie at residues 4–45 (ELKK…IRNI), 48–87 (PAIA…IWDT), 93–135 (LLKY…LWDT), 138–176 (SVGE…FLEG), 180–218 (KFKF…LYDG), 224–263 (VCSL…IWDV), 270–306 (TTFN…YLDK), 311–351 (RPLR…YWDA), 358–408 (TFTG…KMDV), 432–474 (LKDK…LYSI), 480–518 (KDEG…VFSV), 523–561 (SEKN…VWTL), and 566–604 (TRIK…QWTV).

This sequence belongs to the WD repeat AIP1 family.

It localises to the cell membrane. The protein resides in the cytoplasm. Its subcellular location is the cytoskeleton. The protein localises to the nucleus. Induces disassembly of actin filaments in conjunction with ADF/cofilin family proteins. Doesn't sever actin filaments alone, but caps the barbed ends of filaments severed by cofilin, which blocks annealing and depolymerization and allows more extensive severing by cofilin. The chain is WD repeat-containing protein 1-A (wdr1-a) from Xenopus laevis (African clawed frog).